A 461-amino-acid chain; its full sequence is General transcription factor IIH subunit 2 (461 aa).

Residues M1–K13 are compositionally biased toward polar residues. 2 disordered regions span residues M1–G37 and L61–G83. Positions L61–T71 are enriched in basic and acidic residues. Positions H98–P275 constitute a VWFA domain. Residues C315–C332 form a C4-type zinc finger. The span at T423–G447 shows a compositional bias: low complexity. The tract at residues T423–H461 is disordered. A 13 X 2 tandem repeat of N-[GE] region spans residues N434 to G459. Residues N448–H461 show a composition bias toward gly residues.

The protein belongs to the GTF2H2 family. In terms of assembly, component of the 7-subunit TFIIH core complex composed of XPB/repB, XPD/repD, gtf2h1, gtf2h2, gtf2h3, gtf2h4 and gtf2h5, which is active in NER. The core complex associates with the 3-subunit CDK-activating kinase (CAK) module composed of cycH/cyclin H, cdk7 and mnat1 to form the 10-subunit holoenzyme (holo-TFIIH) active in transcription.

The protein localises to the nucleus. In terms of biological role, component of the general transcription and DNA repair factor IIH (TFIIH) core complex, which is involved in general and transcription-coupled nucleotide excision repair (NER) of damaged DNA and, when complexed to CAK, in RNA transcription by RNA polymerase II. In NER, TFIIH acts by opening DNA around the lesion to allow the excision of the damaged oligonucleotide and its replacement by a new DNA fragment. In transcription, TFIIH has an essential role in transcription initiation. When the pre-initiation complex (PIC) has been established, TFIIH is required for promoter opening and promoter escape. Phosphorylation of the C-terminal tail (CTD) of the largest subunit of RNA polymerase II by the kinase module CAK controls the initiation of transcription. The polypeptide is General transcription factor IIH subunit 2 (gtf2h2) (Dictyostelium discoideum (Social amoeba)).